Reading from the N-terminus, the 26-residue chain is Turripeptide OL57 (26 aa).

Contains 2 disulfide bonds. As to expression, expressed by the venom duct.

It localises to the secreted. Functionally, acts as a neurotoxin by inhibiting an ion channel. The polypeptide is Turripeptide OL57 (Iotyrris olangoensis (Sea snail)).